The primary structure comprises 173 residues: Photosystem I assembly protein Ycf3 (173 aa).

3 TPR repeats span residues 35–68 (AYVYYRDGLSAQNDGDYAEALENYEESLKLEENP), 72–105 (GETLKNMAIIYMSNGEEDRALATYQKALDENPKQ), and 120–153 (GRTAEEEGRRDDADGWFDQAAEVWTQAVRLNPGG).

The protein belongs to the Ycf3 family.

It is found in the cellular thylakoid membrane. Essential for the assembly of the photosystem I (PSI) complex. May act as a chaperone-like factor to guide the assembly of the PSI subunits. The protein is Photosystem I assembly protein Ycf3 of Synechococcus sp. (strain WH7803).